Reading from the N-terminus, the 884-residue chain is Chitin synthase E (884 aa).

Disordered stretches follow at residues 1-58 (MGTP…PAVS) and 73-108 (AVFAAPPYQESEAASENTFRARSNGDKASREGSRAG). Composition is skewed to polar residues over residues 37–48 (QSLLERNNSSHY) and 84–93 (EAASENTFRA). Residue Asn44 is glycosylated (N-linked (GlcNAc...) asparagine). A compositionally biased stretch (basic and acidic residues) spans 95 to 105 (SNGDKASREGS). Residue Asn301 is glycosylated (N-linked (GlcNAc...) asparagine). 7 helical membrane-spanning segments follow: residues 513–532 (WLNGSFAAGLYAIMHFGRIY), 556–576 (IMTWFSLASYWLTSSVIMDLV), 597–617 (IVNNFVKYGYVWVLTLQFIMA), 635–655 (YFSLVQLYVLILSFYLVVGAF), 681–701 (GGIVLIALVSTYGIYIIASVL), 708–728 (IITSSWAYFLGMTTSINILMV), and 812–832 (VLVCLWVFSNLLVTLLITATG). Asn840 carries an N-linked (GlcNAc...) asparagine glycan. A helical transmembrane segment spans residues 852–872 (VILWITAGLSLFRFIGSLWFL).

The protein belongs to the chitin synthase family. Class III subfamily.

The protein localises to the cell membrane. It carries out the reaction [(1-&gt;4)-N-acetyl-beta-D-glucosaminyl](n) + UDP-N-acetyl-alpha-D-glucosamine = [(1-&gt;4)-N-acetyl-beta-D-glucosaminyl](n+1) + UDP + H(+). In terms of biological role, polymerizes chitin, a structural polymer of the cell wall and septum, by transferring the sugar moiety of UDP-GlcNAc to the non-reducing end of the growing chitin polymer. Plays an important role in septal growth or maintenance. Mediates colony spore formation. ChsE and chsD seem to play a functionally redundant role in lateral cell wall chitin synthesis. Involved in resistance to echinocandins. The chain is Chitin synthase E from Aspergillus niger (strain ATCC MYA-4892 / CBS 513.88 / FGSC A1513).